A 246-amino-acid chain; its full sequence is Probable septum site-determining protein MinC (246 aa).

Belongs to the MinC family. In terms of assembly, interacts with MinD and FtsZ.

In terms of biological role, cell division inhibitor that blocks the formation of polar Z ring septums. Rapidly oscillates between the poles of the cell to destabilize FtsZ filaments that have formed before they mature into polar Z rings. Prevents FtsZ polymerization. The protein is Probable septum site-determining protein MinC of Pseudomonas syringae pv. syringae (strain B728a).